The following is a 132-amino-acid chain: Fertilization-influencing membrane protein (132 aa).

Residues 100-120 traverse the membrane as a helical segment; that stretch reads PGLFHHILVGLLVVAFFFLLF.

In terms of tissue distribution, testis-specific.

The protein localises to the cell membrane. Functionally, may play a role in sperm-oocyte fusion during fertilization. The sequence is that of Fertilization-influencing membrane protein from Homo sapiens (Human).